Here is a 229-residue protein sequence, read N- to C-terminus: Aldehyde oxidoreductase iron-sulfur-binding subunit PaoA (229 aa).

The tract at residues 1-21 is disordered; sequence MSNQGEYPEDNRVGKHEPHDL. Positions 1 to 53 form a signal peptide, tat-type signal; it reads MSNQGEYPEDNRVGKHEPHDLSLTRRDLIKVSAATAATAVVYPHSTLAASVPA. Positions 9 to 21 are enriched in basic and acidic residues; the sequence is EDNRVGKHEPHDL. The region spanning 61-137 is the 2Fe-2S ferredoxin-type domain; that stretch reads MPLTLKVNGK…GAEITTIEGL (77 aa). [2Fe-2S] cluster-binding residues include C99, C104, G105, C107, C119, C158, C161, C208, and C210.

In terms of assembly, heterotrimer composed of PaoA, PaoB and PaoC. [2Fe-2S] cluster serves as cofactor. In terms of processing, exported by the Tat system. The position of the signal peptide cleavage has not been experimentally proven.

The protein localises to the periplasm. The enzyme catalyses an aldehyde + A + H2O = a carboxylate + AH2 + H(+). Its activity is regulated as follows. The complex requires PaoD for activity. Functionally, oxidizes aldehydes to the corresponding carboxylic acids with a preference for aromatic aldehydes. It might play a role in the detoxification of aldehydes to avoid cell damage. The chain is Aldehyde oxidoreductase iron-sulfur-binding subunit PaoA from Escherichia coli (strain K12).